A 572-amino-acid chain; its full sequence is Proline--tRNA ligase (572 aa).

It belongs to the class-II aminoacyl-tRNA synthetase family. ProS type 1 subfamily. As to quaternary structure, homodimer.

The protein localises to the cytoplasm. The enzyme catalyses tRNA(Pro) + L-proline + ATP = L-prolyl-tRNA(Pro) + AMP + diphosphate. In terms of biological role, catalyzes the attachment of proline to tRNA(Pro) in a two-step reaction: proline is first activated by ATP to form Pro-AMP and then transferred to the acceptor end of tRNA(Pro). As ProRS can inadvertently accommodate and process non-cognate amino acids such as alanine and cysteine, to avoid such errors it has two additional distinct editing activities against alanine. One activity is designated as 'pretransfer' editing and involves the tRNA(Pro)-independent hydrolysis of activated Ala-AMP. The other activity is designated 'posttransfer' editing and involves deacylation of mischarged Ala-tRNA(Pro). The misacylated Cys-tRNA(Pro) is not edited by ProRS. The chain is Proline--tRNA ligase from Klebsiella pneumoniae (strain 342).